The primary structure comprises 360 residues: Glycoprotein-N-acetylgalactosamine 3-beta-galactosyltransferase 1 (360 aa).

The Cytoplasmic portion of the chain corresponds to 1-7; sequence MSIICAK. A helical; Signal-anchor for type II membrane protein membrane pass occupies residues 8-28; the sequence is VAWLPLTLGTAMGFLITFYLA. Residues 29–360 lie on the Lumenal side of the membrane; sequence RTLLERNSQP…SDFLEPPMES (332 aa). C79 and C103 are oxidised to a cystine. 5 residues coordinate UDP: M82, E126, G127, R128, and K134. The N-linked (GlcNAc...) asparagine glycan is linked to N148. D157 contacts UDP. Mn(2+) contacts are provided by D157 and D159. N173 is a glycosylation site (N-linked (GlcNAc...) asparagine). A disulfide bridge connects residues C220 and C234. Residue W274 coordinates a glycoprotein. C289 and C290 are oxidised to a cystine. 2 residues coordinate UDP: H298 and Y299. H298 lines the Mn(2+) pocket. N341 and N347 each carry an N-linked (GlcNAc...) asparagine glycan.

Belongs to the glycosyltransferase 31 family. Beta3-Gal-T subfamily. Homodimer; disulfide-linked. It depends on Mn(2+) as a cofactor.

The protein resides in the membrane. The catalysed reaction is an N-acetyl-alpha-D-galactosaminyl derivative + UDP-alpha-D-galactose = a beta-D-galactosyl-(1-&gt;3)-N-acetyl-alpha-D-galactosaminyl derivative + UDP + H(+). Its pathway is protein modification; protein glycosylation. In terms of biological role, glycosyltransferase that generates the core 1 O-glycan Gal-beta1-3GalNAc-alpha1-Ser/Thr (T antigen), which is a precursor for many extended O-glycans in glycoproteins. This is Glycoprotein-N-acetylgalactosamine 3-beta-galactosyltransferase 1 (c1galt1) from Xenopus laevis (African clawed frog).